Consider the following 440-residue polypeptide: Xylose isomerase (440 aa).

Residues His101 and Asp104 contribute to the active site. Mg(2+) contacts are provided by Glu232, Glu268, His271, Asp296, Asp307, Asp309, and Asp339.

The protein belongs to the xylose isomerase family. As to quaternary structure, homotetramer. Mg(2+) is required as a cofactor.

It is found in the cytoplasm. It catalyses the reaction alpha-D-xylose = alpha-D-xylulofuranose. This is Xylose isomerase from Escherichia coli (strain SE11).